We begin with the raw amino-acid sequence, 100 residues long: Acylphosphatase (100 aa).

One can recognise an Acylphosphatase-like domain in the interval 3-92; sequence RRSYSVIGRV…PLPDTFDIRF (90 aa). Active-site residues include R18 and N36. The disordered stretch occupies residues 76–100; the sequence is DDPAHEGPLPDTFDIRFRAPGSASE.

It belongs to the acylphosphatase family.

The enzyme catalyses an acyl phosphate + H2O = a carboxylate + phosphate + H(+). The chain is Acylphosphatase (acyP) from Nitratidesulfovibrio vulgaris (strain ATCC 29579 / DSM 644 / CCUG 34227 / NCIMB 8303 / VKM B-1760 / Hildenborough) (Desulfovibrio vulgaris).